Reading from the N-terminus, the 91-residue chain is Hepcidin-2 (91 aa).

Positions 1–24 (MKLSNVFLAAVVILTCVCVFQITA) are cleaved as a signal peptide. Positions 25-64 (VPFIQQVQDEHHVESEELQENQHLTEAEHRLTDPLVLFRT) are excised as a propeptide. 4 disulfide bridges follow: C73-C89, C76-C79, C77-C85, and C80-C88.

This sequence belongs to the hepcidin family.

The protein localises to the secreted. Seems to act as a signaling molecule involved in the maintenance of iron homeostasis. Seems to be required in conjunction with HFE to regulate both intestinal iron absorption and iron storage in macrophages. May also have antimicrobial activity. The sequence is that of Hepcidin-2 (hamp2) from Danio rerio (Zebrafish).